The chain runs to 524 residues: Protopine 6-monooxygenase (524 aa).

3 consecutive transmembrane segments (helical) span residues 4–24, 232–252, and 319–339; these read LMLA…VFLY, LASL…DIFQ, and MIMG…SLLM. Cysteine 462 contacts heme.

Belongs to the cytochrome P450 family. Heme serves as cofactor.

The protein resides in the endoplasmic reticulum membrane. It carries out the reaction protopine + reduced [NADPH--hemoprotein reductase] + O2 = 6-hydroxyprotopine + oxidized [NADPH--hemoprotein reductase] + H2O + H(+). It functions in the pathway alkaloid biosynthesis. In terms of biological role, catalyzes the conversion of protopine and allocryptopine to dihydrosanguinarine and dihydrochelerythrine, respectively, in the biosynthesis of isoquinoline alkaloid sanguinarine. The chain is Protopine 6-monooxygenase (CYP82N2v2) from Eschscholzia californica (California poppy).